A 483-amino-acid polypeptide reads, in one-letter code: MIEQAVADLWLPIAVLIMRASWVSPRKGQANVSQMHYARQGVVTEEMAYVAKRENLPESLVMEEVARGRMIIPANINHTGLEPMAIGIASKCKVNANIGASPNASDAAEEVNKLKLAVKYGADTVMDLSTGGVNLDEVRTAIIDASPVPIGTVPVYQALESVHGSIEKLDEDDFLHIIEKHCQQGVDYQTIHAGLLIEHLPKVKGRLTGIVSRGGGILAQWMLYHHRQNPLYTRFDDICEIFKRYDCTFSLGDSLRPGCQHDASDAAQLAELKTLGELTRRAWKHDVQVMVEGPGHVPLDQIEFNVKKQMEECNEAPFYVLGPLVTDIAPGYDHITSAIGAAMAGWHGTAMLCYVTPKEHLGLPNAEDVREGLIAYKIAAHAADIARHRPGARDRDDELSRARYNFDWNKQFELSLDPERAKEYHDETLPADIYKQAEFCSMCGPKHCPMQTKITEEDIEGLEKVLEARGAAELTPVKLDKAD.

Residues Asn-97, Met-126, Tyr-156, His-192, 212–214, 253–256, and Glu-292 contribute to the substrate site; these read SRG and DSLR. His-296 contributes to the Zn(2+) binding site. Tyr-319 contacts substrate. Residue His-360 coordinates Zn(2+). Residues Cys-440, Cys-443, and Cys-448 each coordinate [4Fe-4S] cluster.

It belongs to the ThiC family. [4Fe-4S] cluster is required as a cofactor.

It catalyses the reaction 5-amino-1-(5-phospho-beta-D-ribosyl)imidazole + S-adenosyl-L-methionine = 4-amino-2-methyl-5-(phosphooxymethyl)pyrimidine + CO + 5'-deoxyadenosine + formate + L-methionine + 3 H(+). The protein operates within cofactor biosynthesis; thiamine diphosphate biosynthesis. Functionally, catalyzes the synthesis of the hydroxymethylpyrimidine phosphate (HMP-P) moiety of thiamine from aminoimidazole ribotide (AIR) in a radical S-adenosyl-L-methionine (SAM)-dependent reaction. This Parasynechococcus marenigrum (strain WH8102) protein is Phosphomethylpyrimidine synthase.